The chain runs to 1313 residues: Inactive protein tyrosine kinase pTKL (1313 aa).

MORN repeat units lie at residues tyrosine 20–asparagine 42 and phenylalanine 45–asparagine 63. N-linked (GlcNAc...) asparagine glycans are attached at residues asparagine 63, asparagine 131, asparagine 178, asparagine 208, asparagine 254, asparagine 260, and asparagine 288. One can recognise an SAM domain in the interval tryptophan 300–threonine 365. Asparagine 466, asparagine 516, asparagine 525, asparagine 528, and asparagine 534 each carry an N-linked (GlcNAc...) asparagine glycan. Over residues glutamate 569–asparagine 580 the composition is skewed to basic and acidic residues. The disordered stretch occupies residues glutamate 569–glutamate 631. Residues proline 586–lysine 604 show a composition bias toward polar residues. N-linked (GlcNAc...) asparagine glycosylation is found at asparagine 592, asparagine 598, asparagine 661, asparagine 678, asparagine 729, asparagine 735, and asparagine 749. Lysine 782 serves as a coordination point for ATP. Asparagine 790, asparagine 868, asparagine 940, asparagine 983, and asparagine 1000 each carry an N-linked (GlcNAc...) asparagine glycan. Residues phenylalanine 962–methionine 1294 form the Protein kinase domain. The RVxF motif signature appears at lysine 1052–phenylalanine 1055. N-linked (GlcNAc...) asparagine glycosylation is found at asparagine 1191 and asparagine 1198.

Belongs to the protein kinase superfamily. TKL Ser/Thr protein kinase family.

The protein resides in the parasitophorous vacuole. It localises to the host cell membrane. Its subcellular location is the host cytoplasm. It is found in the host cytoskeleton. The protein is Inactive protein tyrosine kinase pTKL of Plasmodium berghei (strain Anka).